A 588-amino-acid chain; its full sequence is ATP-dependent lipid A-core flippase (588 aa).

The next 6 membrane-spanning stretches (helical) occupy residues 23–43, 56–76, 141–161, 162–182, 257–277, and 278–298; these read FWPV…IDAG, FITI…IGIT, DALT…TVMM, VICW…GIIV, LVIA…STVI, and TISA…IKPM. In terms of domain architecture, ABC transmembrane type-1 spans 28–310; it reads LLGVLANILY…LTTLNATIQR (283 aa). Positions 342 to 576 constitute an ABC transporter domain; it reads IEFKHVYHAY…DGHYAQLYKV (235 aa). 375-382 lines the ATP pocket; sequence GHSGSGKT.

Belongs to the ABC transporter superfamily. Lipid exporter (TC 3.A.1.106) family. As to quaternary structure, homodimer.

The protein resides in the cell inner membrane. It carries out the reaction ATP + H2O + lipid A-core oligosaccharideSide 1 = ADP + phosphate + lipid A-core oligosaccharideSide 2.. Involved in lipopolysaccharide (LPS) biosynthesis. Translocates lipid A-core from the inner to the outer leaflet of the inner membrane. Transmembrane domains (TMD) form a pore in the inner membrane and the ATP-binding domain (NBD) is responsible for energy generation. This is ATP-dependent lipid A-core flippase from Legionella pneumophila (strain Lens).